Consider the following 239-residue polypeptide: MQERKRVLVKFSGEALAGENGFGIENSILKFIASEIKELIKNQIEVGIVIGGGNIIRGVSAAKGGLIKRTSGDHMGMLATVINAIAIQEALESSGLEVRVQSAIQMEAFCETYIMRRAQRHLEKGRVVVFAAGTGNPYFTTDTTAILRAVEIDADMVIKATKVNGVYDKDPKQFDDAVFLNTLSYDEAMQDNIKVMDDTAIALAKDNKLPIVVCNMFEEGNLLKIIQGDTSLCSIVKNN.

10–13 lines the ATP pocket; it reads KFSG. The segment at 18–23 is involved in allosteric activation by GTP; it reads GENGFG. Gly52 is a UMP binding site. ATP contacts are provided by Gly53 and Arg57. UMP contacts are provided by residues Asp73 and 134–141; that span reads TGNPYFTT. Thr161, Tyr167, and Asp170 together coordinate ATP.

Belongs to the UMP kinase family. As to quaternary structure, homohexamer.

Its subcellular location is the cytoplasm. It catalyses the reaction UMP + ATP = UDP + ADP. It functions in the pathway pyrimidine metabolism; CTP biosynthesis via de novo pathway; UDP from UMP (UMPK route): step 1/1. Allosterically activated by GTP. Inhibited by UTP. Functionally, catalyzes the reversible phosphorylation of UMP to UDP. This Campylobacter jejuni subsp. jejuni serotype O:6 (strain 81116 / NCTC 11828) protein is Uridylate kinase.